We begin with the raw amino-acid sequence, 454 residues long: Probable ECA polymerase (454 aa).

11 helical membrane passes run Phe6 to Phe26, Val37 to Leu57, Val63 to Ala83, Met122 to Phe142, Gly157 to Leu177, Ala183 to Gly203, Ile209 to Gly229, Met230 to Tyr250, Leu343 to Ile363, Tyr380 to Ala400, and Val411 to Leu431.

The protein belongs to the WzyE family. Probably part of a complex composed of WzxE, WzyE and WzzE.

It localises to the cell inner membrane. Its pathway is bacterial outer membrane biogenesis; enterobacterial common antigen biosynthesis. Its function is as follows. Probably involved in the polymerization of enterobacterial common antigen (ECA) trisaccharide repeat units. The polypeptide is Probable ECA polymerase (Cronobacter sakazakii (strain ATCC BAA-894) (Enterobacter sakazakii)).